A 180-amino-acid chain; its full sequence is Protein GrpE (180 aa).

The tract at residues 1-21 (MSEEVKEQNLPEVEPVQEAAS) is disordered.

The protein belongs to the GrpE family. Homodimer.

It is found in the cytoplasm. Functionally, participates actively in the response to hyperosmotic and heat shock by preventing the aggregation of stress-denatured proteins, in association with DnaK and GrpE. It is the nucleotide exchange factor for DnaK and may function as a thermosensor. Unfolded proteins bind initially to DnaJ; upon interaction with the DnaJ-bound protein, DnaK hydrolyzes its bound ATP, resulting in the formation of a stable complex. GrpE releases ADP from DnaK; ATP binding to DnaK triggers the release of the substrate protein, thus completing the reaction cycle. Several rounds of ATP-dependent interactions between DnaJ, DnaK and GrpE are required for fully efficient folding. The protein is Protein GrpE of Campylobacter concisus (strain 13826).